The following is a 1377-amino-acid chain: Protein RhsA (1377 aa).

Tandem repeats lie at residues 330–352 (GKQV…HRHT), 353–374 (GRPE…LNPA), 375–417 (GLSY…EHAD), 418–438 (GSVT…TDAA), 439–460 (GRTT…TTPD), 461–481 (GRAS…TGPD), 482–502 (GLEL…TAPD), 503–525 (GDIT…EDAT), 526–546 (GSRK…TDCS), 547–567 (GYVT…HREE), 568–588 (GLSQ…KDTQ), 589–609 (GHET…IAPD), 610–629 (GSRN…TTQG), 630–650 (GLTR…TSEN), 651–671 (GSHT…TGFD), 672–691 (GRTQ…SEDE), 692–711 (GLVT…RTVK), 712–734 (GETA…HISE), 735–758 (GHRV…QTVH), 808–828 (GDTP…LRSF), 829–850 (GRYE…HLNS), 851–871 (LLSD…ISSP), 872–894 (RQTR…TAAN), 895–930 (LDIR…NRIA), 931–959 (RDAH…VIRT), 960–984 (DDER…TQYE), 985–1019 (EPLV…MSLS), and 1162–1186 (GTTE…HQLQ). The 28 X approximate tandem repeats stretch occupies residues 330–1186 (GKQVRSFTYD…LNEENPHQLQ (857 aa)). The disordered stretch occupies residues 1356-1377 (DAKSTQKAWNCRHSRQSNDKKR).

It belongs to the RHS family.

In terms of biological role, rhs elements have a nonessential function. They may play an important role in the natural ecology of the cell. This chain is Protein RhsA (rhsA), found in Escherichia coli (strain K12).